Reading from the N-terminus, the 80-residue chain is CLAVATA3/ESR (CLE)-related protein 4 (80 aa).

The N-terminal stretch at 1–22 is a signal peptide; that stretch reads MASFKLWVCLILLLLEFSVHQC. A disordered region spans residues 55–80; it reads SKDGQTVLGTLDSKRLSPGGPDPRHH. Hydroxyproline occurs at positions 72 and 75. Pro-75 carries an O-linked (Ara...) hydroxyproline glycan.

The protein belongs to the CLV3/ESR signal peptide family. Post-translationally, the O-glycosylation (arabinosylation) of the hydroxyproline Pro-75 enhances binding affinity of the CLE4p peptide for its receptor. As to expression, expressed in roots and seedlings.

It localises to the secreted. It is found in the extracellular space. In terms of biological role, extracellular signal peptide that regulates cell fate. The sequence is that of CLAVATA3/ESR (CLE)-related protein 4 from Arabidopsis thaliana (Mouse-ear cress).